We begin with the raw amino-acid sequence, 218 residues long: Ropporin-1-like protein (218 aa).

One can recognise an RIIa domain in the interval 17 to 54 (PELPDILKQFTKAAIRTQPADVLQWSAGYFSALSRGDP).

It belongs to the ropporin family. In terms of assembly, component of the axonemal radial spoke complex 1 (RS1), at least composed of spoke head proteins RSPH1, RSPH3, RSPH9 and the cilia-specific component RSPH4A or sperm-specific component RSPH6A, spoke stalk proteins RSPH14, DNAJB13, DYDC1, ROPN1L and NME5, and the anchor protein IQUB. May interact with AKAP3. Interacts with FSCB; the interaction increases upon spermatozoa capacitation conditions. Interacts with CFAP61. In terms of processing, sumoylated, sumoylation decreases upon spermatozoa capacitation conditions. In terms of tissue distribution, testis-specific. Expression is restricted to germ cells.

Its subcellular location is the cell projection. The protein localises to the cilium. It is found in the flagellum. In terms of biological role, functions as part of axonemal radial spoke complexes that play an important part in the motility of sperm and cilia. Important for male fertility. With ROPN1, involved in fibrous sheath integrity and sperm motility, plays a role in PKA-dependent signaling processes required for spermatozoa capacitation. The chain is Ropporin-1-like protein (Ropn1l) from Mus musculus (Mouse).